The primary structure comprises 103 residues: Growth-regulated alpha protein (103 aa).

The signal sequence occupies residues 1 to 30 (MARAANPAPRLLGAAMLLLLLVAAGRRAAG). Disulfide bonds link C39/C65 and C41/C81.

This sequence belongs to the intercrine alpha (chemokine CxC) family.

The protein localises to the secreted. Its function is as follows. Has chemotactic activity for neutrophils. The protein is Growth-regulated alpha protein (CXCL1) of Ovis aries (Sheep).